Reading from the N-terminus, the 637-residue chain is MALLSIVSLQVPKSCGLKSLISSSNVQKALCISTAVPTLRMRRRQKALVINMKLTTVSHRDDNGGGVLQRRIADHHPNLWEDDFIQSLSSPYGGSSYSERAETVVEEVKEMFNSIPNNRELFGSQNDLLTRLWMVDSIERLGIDRHFQNEIRVALDYVYSYWKEKEGIGCGRDSTFPDLNSTALALRTLRLHGYNVSSDVLEYFKDEKGHFACPAILTEGQITRSVLNLYRASLVAFPGEKVMEEAEIFSASYLKKVLQKIPVSNLSGEIEYVLEYGWHTNLPRLEARNYIEVYEQSGYESLNEMPYMNMKKLLQLAKLEFNIFHSLQLRELQSISRWWKESGSSQLTFTRHRHVEYYTMASCISMLPKHSAFRMEFVKVCHLVTVLDDIYDTFGTMNELQLFTDAIKRWDLSTTRWLPEYMKGVYMDLYQCINEMVEEAEKTQGRDMLNYIQNAWEALFDTFMQEAKWISSSYLPTFEEYLKNAKVSSGSRIATLQPILTLDVPLPDYILQEIDYPSRFNELASSILRLRGDTRCYKADRARGEEASAISCYMKDHPGSIEEDALNHINAMISDAIRELNWELLRPDSKSPISSKKHAFDITRAFHHVYKYRDGYTVSNNETKNLVMKTVLEPLAL.

Residues 1–56 (MALLSIVSLQVPKSCGLKSLISSSNVQKALCISTAVPTLRMRRRQKALVINMKLTT) constitute a chloroplast transit peptide. Mg(2+) contacts are provided by D388, D392, and D540. Residues 388-392 (DDIYD) carry the DDXXD motif motif.

The protein belongs to the terpene synthase family. Tpsd subfamily. Requires Mg(2+) as cofactor. The cofactor is Mn(2+). K(+) is required as a cofactor.

It is found in the plastid. Its subcellular location is the chloroplast. It carries out the reaction (2E)-geranyl diphosphate = (4S)-limonene + diphosphate. It functions in the pathway terpene metabolism; oleoresin biosynthesis. Its function is as follows. Involved in defensive oleoresin formation in conifers in response to insect attack or other injury. Involved in monoterpene (C10) olefins biosynthesis. The sequence is that of Limonene synthase, chloroplastic (ag10) from Abies grandis (Grand fir).